The sequence spans 278 residues: Dermonecrotic toxin LspiSicTox-betaIE2iii (278 aa).

Residue His5 is part of the active site. Mg(2+)-binding residues include Glu25 and Asp27. Residue His41 is the Nucleophile of the active site. Disulfide bonds link Cys45–Cys51 and Cys47–Cys190. A Mg(2+)-binding site is contributed by Asp85.

Belongs to the arthropod phospholipase D family. Class II subfamily. Mg(2+) is required as a cofactor. As to expression, expressed by the venom gland.

Its subcellular location is the secreted. It catalyses the reaction an N-(acyl)-sphingosylphosphocholine = an N-(acyl)-sphingosyl-1,3-cyclic phosphate + choline. The enzyme catalyses an N-(acyl)-sphingosylphosphoethanolamine = an N-(acyl)-sphingosyl-1,3-cyclic phosphate + ethanolamine. It carries out the reaction a 1-acyl-sn-glycero-3-phosphocholine = a 1-acyl-sn-glycero-2,3-cyclic phosphate + choline. The catalysed reaction is a 1-acyl-sn-glycero-3-phosphoethanolamine = a 1-acyl-sn-glycero-2,3-cyclic phosphate + ethanolamine. In terms of biological role, dermonecrotic toxins cleave the phosphodiester linkage between the phosphate and headgroup of certain phospholipids (sphingolipid and lysolipid substrates), forming an alcohol (often choline) and a cyclic phosphate. This toxin acts on sphingomyelin (SM). It may also act on ceramide phosphoethanolamine (CPE), lysophosphatidylcholine (LPC) and lysophosphatidylethanolamine (LPE), but not on lysophosphatidylserine (LPS), and lysophosphatidylglycerol (LPG). It acts by transphosphatidylation, releasing exclusively cyclic phosphate products as second products. Induces dermonecrosis, hemolysis, increased vascular permeability, edema, inflammatory response, and platelet aggregation. The sequence is that of Dermonecrotic toxin LspiSicTox-betaIE2iii from Loxosceles spinulosa (Recluse spider).